The primary structure comprises 166 residues: Protein-export protein SecB (166 aa).

It belongs to the SecB family. As to quaternary structure, homotetramer, a dimer of dimers. One homotetramer interacts with 1 SecA dimer.

The protein localises to the cytoplasm. Functionally, one of the proteins required for the normal export of preproteins out of the cell cytoplasm. It is a molecular chaperone that binds to a subset of precursor proteins, maintaining them in a translocation-competent state. It also specifically binds to its receptor SecA. The protein is Protein-export protein SecB of Cereibacter sphaeroides (strain ATCC 17029 / ATH 2.4.9) (Rhodobacter sphaeroides).